We begin with the raw amino-acid sequence, 287 residues long: Formamidopyrimidine-DNA glycosylase (287 aa).

The active-site Schiff-base intermediate with DNA is P2. E3 (proton donor) is an active-site residue. The active-site Proton donor; for beta-elimination activity is K58. The DNA site is built by H104, R123, and R166. Residues 251–287 form an FPG-type zinc finger; the sequence is RVYDREGQPCPTPGCKGMIGREVQAGRSTFFCPVCQV. R277 (proton donor; for delta-elimination activity) is an active-site residue.

The protein belongs to the FPG family. Monomer. The cofactor is Zn(2+).

The enzyme catalyses Hydrolysis of DNA containing ring-opened 7-methylguanine residues, releasing 2,6-diamino-4-hydroxy-5-(N-methyl)formamidopyrimidine.. It catalyses the reaction 2'-deoxyribonucleotide-(2'-deoxyribose 5'-phosphate)-2'-deoxyribonucleotide-DNA = a 3'-end 2'-deoxyribonucleotide-(2,3-dehydro-2,3-deoxyribose 5'-phosphate)-DNA + a 5'-end 5'-phospho-2'-deoxyribonucleoside-DNA + H(+). Its function is as follows. Involved in base excision repair of DNA damaged by oxidation or by mutagenic agents. Acts as a DNA glycosylase that recognizes and removes damaged bases. Has a preference for oxidized purines, such as 7,8-dihydro-8-oxoguanine (8-oxoG). Has AP (apurinic/apyrimidinic) lyase activity and introduces nicks in the DNA strand. Cleaves the DNA backbone by beta-delta elimination to generate a single-strand break at the site of the removed base with both 3'- and 5'-phosphates. The polypeptide is Formamidopyrimidine-DNA glycosylase (Caulobacter sp. (strain K31)).